Reading from the N-terminus, the 1325-residue chain is Lysine-specific demethylase 3A (1325 aa).

Disordered stretches follow at residues 249-284, 300-333, and 372-399; these read SKRI…QGHV, PANK…RRSV, and QNGK…TGLK. A compositionally biased stretch (polar residues) spans 274–283; sequence SPEVSQSQGH. The segment covering 378-390 has biased composition (low complexity); it reads SLISSRSSSLSDS. Residues 669-694 form a C6-type zinc finger; the sequence is CDVCDTTIFNLRWVCSKCGFGVCVDC. Disordered stretches follow at residues 772–791 and 798–819; these read TLKE…SLQQ and PQLP…TASV. The short motif at 888–892 is the LXXLL motif element; that stretch reads LRNLL. The 224-residue stretch at 1062 to 1285 folds into the JmjC domain; that stretch reads MPSRFDDLMK…HCFWLTQEFR (224 aa). Fe cation is bound by residues H1124, D1126, and H1253.

It belongs to the JHDM2 histone demethylase family. The cofactor is Fe(2+).

It is found in the cytoplasm. Its subcellular location is the nucleus. It carries out the reaction N(6),N(6)-dimethyl-L-lysyl(9)-[histone H3] + 2 2-oxoglutarate + 2 O2 = L-lysyl(9)-[histone H3] + 2 formaldehyde + 2 succinate + 2 CO2. Functionally, histone demethylase that specifically demethylates 'Lys-9' of histone H3, thereby playing a central role in histone code. Preferentially demethylates mono- and dimethylated H3 'Lys-9' residue, with a preference for dimethylated residue, while it has weak or no activity on trimethylated H3 'Lys-9'. Demethylation of Lys residue generates formaldehyde and succinate. This chain is Lysine-specific demethylase 3A (KDM3A), found in Gallus gallus (Chicken).